Reading from the N-terminus, the 596-residue chain is Elongation factor 4 (596 aa).

In terms of domain architecture, tr-type G spans 2–184; that stretch reads KHIRNFSIIA…TIVAQIPPPE (183 aa). GTP is bound by residues 14-19 and 131-134; these read DHGKST and NKID.

Belongs to the TRAFAC class translation factor GTPase superfamily. Classic translation factor GTPase family. LepA subfamily.

It localises to the cell inner membrane. It catalyses the reaction GTP + H2O = GDP + phosphate + H(+). Its function is as follows. Required for accurate and efficient protein synthesis under certain stress conditions. May act as a fidelity factor of the translation reaction, by catalyzing a one-codon backward translocation of tRNAs on improperly translocated ribosomes. Back-translocation proceeds from a post-translocation (POST) complex to a pre-translocation (PRE) complex, thus giving elongation factor G a second chance to translocate the tRNAs correctly. Binds to ribosomes in a GTP-dependent manner. This chain is Elongation factor 4, found in Shewanella loihica (strain ATCC BAA-1088 / PV-4).